The sequence spans 2055 residues: Protein PHOTOPERIOD-INDEPENDENT EARLY FLOWERING 1 (2055 aa).

Positions 1–47 (MASKGGKSKPDIVMASKSGKSKPDNESRAKRQKTLEAPKEPRRPKTH) are disordered. Over residues 21 to 47 (SKPDNESRAKRQKTLEAPKEPRRPKTH) the composition is skewed to basic and acidic residues. Residues 29-36 (AKRQKTLE) carry the Nuclear localization signal 1 motif. The region spanning 35–107 (LEAPKEPRRP…EEQRLRKVAL (73 aa)) is the HSA domain. 2 coiled-coil regions span residues 78–147 (LRAS…LEFL) and 229–250 (EEDE…LQNE). 2 disordered regions span residues 183-332 (KSDE…SNDS) and 340-359 (ETHS…KSRK). Positions 208–230 (ELDEDYDLKSEDETEDDEDTIEE) are enriched in acidic residues. Basic and acidic residues-rich tracts occupy residues 231 to 243 (DEKH…RQEE) and 267 to 276 (VSRETSPVKD). Residues 392–416 (EEELAKADNEDHVEEIALLQKESEM) are a coiled coil. The interval 432–461 (KDISEDESESSFAVSEDSIVDSDENRQQAD) is disordered. Residues 548–713 (VTMYEKKLNG…WSLMHFLMPH (166 aa)) form the Helicase ATP-binding domain. 561–568 (DEMGLGKT) lines the ATP pocket. Positions 664–667 (DEAH) match the DEAH box motif. The Helicase C-terminal domain occupies 1076–1229 (KLQELAMLLR…NLVIQNGEYN (154 aa)). The disordered stretch occupies residues 1293–1313 (EEAVDNQEFTEEPVERPEDDE). Positions 1419 to 1492 (FEEKEWELDH…EREAAEVAEM (74 aa)) form a coiled coil. 2 consecutive short sequence motifs (nuclear localization signal) follow at residues 1506–1513 (KKKKKAKK) and 1570–1577 (KKRDLIVD). The interval 1577 to 1597 (DTDEEKTSKKKAKKHKKSLPN) is disordered. The span at 1584-1594 (SKKKAKKHKKS) shows a compositional bias: basic residues. The 55-residue stretch at 1673 to 1727 (SWLPQEDAILCAMVHEYGPNWNFVSGTLYGMTAGGAYRGRYRHPAYCCERYRELI) folds into the Myb-like domain. Disordered stretches follow at residues 1843-1864 (ALQD…LQET) and 1951-1977 (KSRT…STKS). Over residues 1844 to 1864 (LQDSGPSQPDNTISRSRLQET) the composition is skewed to polar residues. Residues 2006–2029 (GDREEEEEQEVDEKANSAEIEMIS) are a coiled coil.

The protein belongs to the SNF2/RAD54 helicase family. SWR1 subfamily. As to quaternary structure, component of the SWR1 chromatin-remodeling complex composed of at least ARP6/ESD1/SUF3, PIE1, SWC6, SWC2 and H2AZs (HTA8, HTA9, HTA11). Interacts (via c-terminus) with SWC6 and ARP6 and (via N-terminus) with H2AZs. In terms of tissue distribution, expressed in ovules, but not in stamens.

It is found in the nucleus. It carries out the reaction ATP + H2O = ADP + phosphate + H(+). In terms of biological role, component of the SWR1 complex which mediates the ATP-dependent exchange of histone H2A for the H2A variant H2A.F/Z leading to transcriptional regulation of selected genes (e.g. FLC) by chromatin remodeling. Probable DNA-dependent ATPase. Not involved in the repression of FLC in gametophytes, but required for the reactivation of FLC in early embryos and for the maintenance of full activation of FLC in late embryos. This chain is Protein PHOTOPERIOD-INDEPENDENT EARLY FLOWERING 1 (PIE1), found in Arabidopsis thaliana (Mouse-ear cress).